A 97-amino-acid chain; its full sequence is Stefin-1 (97 aa).

The short motif at 46 to 50 (QVVAG) is the Secondary area of contact element.

This sequence belongs to the cystatin family.

It localises to the cytoplasm. In terms of biological role, this is an intracellular thiol proteinase inhibitor. The chain is Stefin-1 (Stfa1) from Mus musculus (Mouse).